A 215-amino-acid polypeptide reads, in one-letter code: 3-isopropylmalate dehydratase small subunit (215 aa).

Belongs to the LeuD family. LeuD type 1 subfamily. In terms of assembly, heterodimer of LeuC and LeuD.

It carries out the reaction (2R,3S)-3-isopropylmalate = (2S)-2-isopropylmalate. The protein operates within amino-acid biosynthesis; L-leucine biosynthesis; L-leucine from 3-methyl-2-oxobutanoate: step 2/4. Its function is as follows. Catalyzes the isomerization between 2-isopropylmalate and 3-isopropylmalate, via the formation of 2-isopropylmaleate. The polypeptide is 3-isopropylmalate dehydratase small subunit (Chromohalobacter salexigens (strain ATCC BAA-138 / DSM 3043 / CIP 106854 / NCIMB 13768 / 1H11)).